Here is a 328-residue protein sequence, read N- to C-terminus: Sterol demethylase protein B (328 aa).

The protein belongs to the NAD(P)-dependent epimerase/dehydratase family.

It carries out the reaction a 3beta-hydroxy-4alpha-methylsteroid-4beta-carboxylate + NAD(+) = a 4alpha-methyl-3-oxosteroid + CO2 + NADH. The enzyme catalyses a 3beta-hydroxy-4alpha-methylsteroid-4beta-carboxylate + NADP(+) = a 4alpha-methyl-3-oxosteroid + CO2 + NADPH. The catalysed reaction is 4beta-carboxy-4alpha-methyl-5alpha-cholesta-8,24-dien-3beta-ol + NAD(+) = 3-dehydro-4alpha-methylzymosterol + CO2 + NADH. It catalyses the reaction 4beta-carboxy-4alpha-methyl-5alpha-cholesta-8,24-dien-3beta-ol + NADP(+) = 3-dehydro-4alpha-methylzymosterol + CO2 + NADPH. It carries out the reaction 3-dehydro-4alpha-methylzymosterol + NADPH + H(+) = 4alpha-methylzymosterol + NADP(+). It functions in the pathway steroid biosynthesis; sterol biosynthesis. In terms of biological role, participates in the biosynthesis of bacterial sterols. Together with SdmA, removes one methyl group from the C-4 position of 4,4-dimethylated steroid molecules. SdmB catalyzes an oxidative decarboxylation that results in reduction of the 3beta-hydroxy group at the C-3 carbon to an oxo group. It also functions as a ketoreductase that converts the C-3 oxo group back to a hydroxyl group after C-4 demethylation. In Methylococcus capsulatus (strain ATCC 33009 / NCIMB 11132 / Bath), this protein is Sterol demethylase protein B.